The sequence spans 244 residues: 14-3-3 protein beta/alpha (244 aa).

The residue at position 1 (Met-1) is an N-acetylmethionine. Ser-184 bears the Phosphoserine mark.

The protein belongs to the 14-3-3 family. Homodimer, and heterodimer with other family members. In terms of processing, phosphorylated.

The protein resides in the cytoplasm. Adapter protein implicated in the regulation of a large spectrum of both general and specialized signaling pathways. Binds to a large number of partners, usually by recognition of a phosphoserine or phosphothreonine motif. Binding generally results in the modulation of the activity of the binding partner. This chain is 14-3-3 protein beta/alpha (YWHAB), found in Gallus gallus (Chicken).